The chain runs to 125 residues: RutC family protein aq_364 (125 aa).

Belongs to the RutC family.

This is RutC family protein aq_364 from Aquifex aeolicus (strain VF5).